The sequence spans 472 residues: Glutamine synthetase (472 aa).

Positions 17–101 (NNVKFVLLRF…IRCSVYEPTT (85 aa)) constitute a GS beta-grasp domain. Residues 109 to 472 (PRSIAIRAEN…HPVEFEMYYA (364 aa)) form the GS catalytic domain. Mg(2+)-binding residues include Glu-134 and Glu-136. Glu-212 is an ATP binding site. 2 residues coordinate Mg(2+): Glu-217 and Glu-225. L-glutamate-binding positions include 269 to 270 (NG) and Gly-270. His-274 is a binding site for Mg(2+). ATP is bound by residues 276-278 (NMS) and Ser-278. Residues Arg-326, Glu-332, and Arg-344 each coordinate L-glutamate. Positions 344, 349, and 357 each coordinate ATP. Position 362 (Glu-362) interacts with Mg(2+). Arg-364 provides a ligand contact to L-glutamate. Residue Tyr-402 is modified to O-AMP-tyrosine.

Belongs to the glutamine synthetase family. As to quaternary structure, oligomer of 12 subunits arranged in the form of two hexameric ring. It depends on Mg(2+) as a cofactor.

The protein localises to the cytoplasm. The catalysed reaction is L-glutamate + NH4(+) + ATP = L-glutamine + ADP + phosphate + H(+). Its activity is regulated as follows. The activity of this enzyme could be controlled by adenylation under conditions of abundant glutamine. Catalyzes the ATP-dependent biosynthesis of glutamine from glutamate and ammonia. This Haemophilus influenzae (strain ATCC 51907 / DSM 11121 / KW20 / Rd) protein is Glutamine synthetase.